Reading from the N-terminus, the 689-residue chain is Beta-adrenergic receptor kinase 1 (689 aa).

The N-terminal stretch occupies residues 1–190 (MADLEAVLAD…ELNIHLTMND (190 aa)). The 122-residue stretch at 54-175 (TFEKIFSQKL…IESDKFTRFC (122 aa)) folds into the RGS domain. The region spanning 191–453 (FSVHRIIGRG…AQEVKESPFF (263 aa)) is the Protein kinase domain. ATP contacts are provided by residues 197-205 (IGRGGFGEV) and lysine 220. The active-site Proton acceptor is the aspartate 317. Residues 454–521 (RSLDWQMVFL…TISERWQQEV (68 aa)) form the AGC-kinase C-terminal domain. The region spanning 558–652 (DCIMHGYMSK…WKKELRDAYR (95 aa)) is the PH domain. Residue serine 670 is modified to Phosphoserine.

It belongs to the protein kinase superfamily. AGC Ser/Thr protein kinase family. GPRK subfamily. In terms of assembly, interacts with the heterodimer formed by GNB1 and GNG2. Interacts with GIT1. Interacts with, and phosphorylates chemokine-stimulated CCR5. Interacts with ARRB1. Interacts with LPAR1 and LPAR2. Interacts with RALA in response to LPAR1 activation. ADRBK1 and RALA mutually inhibit each other's binding to LPAR1. Interacts with ADRB2.

The protein localises to the cytoplasm. It localises to the cell membrane. It is found in the postsynapse. Its subcellular location is the presynapse. It carries out the reaction [beta-adrenergic receptor] + ATP = [beta-adrenergic receptor]-phosphate + ADP + H(+). With respect to regulation, in contrast to other AGC family kinases, the catalytic activity is solely regulated by the binding of substrates and ligands, not by phosphorylation of the kinase domain. In terms of biological role, specifically phosphorylates the agonist-occupied form of the beta-adrenergic and closely related receptors, probably inducing a desensitization of them. Key regulator of LPAR1 signaling. Competes with RALA for binding to LPAR1 thus affecting the signaling properties of the receptor. Desensitizes LPAR1 and LPAR2 in a phosphorylation-independent manner. Positively regulates ciliary smoothened (SMO)-dependent Hedgehog (Hh) signaling pathway by facilitating the trafficking of SMO into the cilium and the stimulation of SMO activity. Inhibits relaxation of airway smooth muscle in response to blue light. The protein is Beta-adrenergic receptor kinase 1 of Mesocricetus auratus (Golden hamster).